We begin with the raw amino-acid sequence, 127 residues long: F420-non-reducing hydrogenase subunit G (127 aa).

The protein belongs to the [NiFe]/[NiFeSe] hydrogenase small subunit family. As to quaternary structure, the F420-non-reducing hydrogenase is composed of three subunits; MvhA, MvhD and MvhG. It forms a complex with the heterodisulfide reductase (hdr).

Part of a complex that provides reducing equivalents for heterodisulfide reductase. This chain is F420-non-reducing hydrogenase subunit G (mvhG), found in Methanothermus fervidus.